A 150-amino-acid chain; its full sequence is UPF0506 protein SJCHGC03047 (150 aa).

An N-terminal signal peptide occupies residues 1–18 (MNTCIQLLILCLVTLTNS). N-linked (GlcNAc...) asparagine glycans are attached at residues asparagine 20, asparagine 48, and asparagine 110. 3 cysteine pairs are disulfide-bonded: cysteine 116–cysteine 130, cysteine 123–cysteine 134, and cysteine 129–cysteine 139.

This sequence belongs to the UPF0506 family.

Its subcellular location is the secreted. This Schistosoma japonicum (Blood fluke) protein is UPF0506 protein SJCHGC03047.